The following is a 263-amino-acid chain: Probable ribosomal RNA small subunit methyltransferase A (263 aa).

Residues leucine 12, glycine 37, glutamate 58, aspartate 83, and asparagine 100 each coordinate S-adenosyl-L-methionine.

This sequence belongs to the class I-like SAM-binding methyltransferase superfamily. rRNA adenine N(6)-methyltransferase family. RsmA subfamily.

Its subcellular location is the cytoplasm. In terms of biological role, specifically dimethylates two adjacent adenosines in the loop of a conserved hairpin near the 3'-end of 16S rRNA in the 30S particle. May play a critical role in biogenesis of 30S subunits. The protein is Probable ribosomal RNA small subunit methyltransferase A of Methanococcus maripaludis (strain C7 / ATCC BAA-1331).